Consider the following 239-residue polypeptide: Large ribosomal subunit protein uL2 (239 aa).

Residues Gly205 to Arg224 form a disordered region.

Belongs to the universal ribosomal protein uL2 family. Part of the 50S ribosomal subunit. Forms a bridge to the 30S subunit in the 70S ribosome.

In terms of biological role, one of the primary rRNA binding proteins. Required for association of the 30S and 50S subunits to form the 70S ribosome, for tRNA binding and peptide bond formation. It has been suggested to have peptidyltransferase activity; this is somewhat controversial. Makes several contacts with the 16S rRNA in the 70S ribosome. This chain is Large ribosomal subunit protein uL2, found in Methanoculleus marisnigri (strain ATCC 35101 / DSM 1498 / JR1).